The primary structure comprises 323 residues: Global nitrogen regulator NrpRI (323 aa).

The winged helix-turn-helix stretch occupies residues 11–76; the sequence is IEIMRVIHES…TLTDLGENEM (66 aa). Residues 86 to 323 form an NRD region; the sequence is GFVISRIEEM…MLDYQTMKEI (238 aa).

Belongs to the NrpR family. Forms a complex with NrpRII and the general archaeal transcription factors TBP and TFB. Interacts directly with NrpRII.

With respect to regulation, under nitrogen limitation, binding of 2-oxoglutarate to the NrpRI/NrpRII complex decreases the binding affinity of NrpRI to DNA as well as the binding affinity of NrpRII to TBP and TFB, which leads to removal of the complex from the operator, RNA polymerase recruitment and initiation of transcription. Plays a major role in nitrogen regulation. Under nitrogen sufficiency, binds to the nifH and the glnk1 promoters, leading to repression of the transcription of the genes. The polypeptide is Global nitrogen regulator NrpRI (Methanosarcina mazei (strain ATCC BAA-159 / DSM 3647 / Goe1 / Go1 / JCM 11833 / OCM 88) (Methanosarcina frisia)).